The following is a 357-amino-acid chain: Putative DNA directed RNA polymerase subunit R470 (357 aa).

Belongs to the archaeal Rpo11/eukaryotic RPB11/RPC19 RNA polymerase subunit family.

It is found in the virion. The catalysed reaction is RNA(n) + a ribonucleoside 5'-triphosphate = RNA(n+1) + diphosphate. The chain is Putative DNA directed RNA polymerase subunit R470 from Acanthamoeba polyphaga mimivirus (APMV).